We begin with the raw amino-acid sequence, 275 residues long: Ceramide synthase (275 aa).

In terms of domain architecture, TLC spans 34–261 (ADAVIVSARL…ICRGACRLFR (228 aa)). The next 4 membrane-spanning stretches (helical) occupy residues 130–150 (FLMVLHHAAMVLVCFPLSVVW), 159–179 (LGCMLMAEVSTPFVCLGKILI), 194–214 (ALMLLSFLCCRVLLFPYLYWA), and 232–252 (AHVNLGAALLLAPQLYWFFLI).

As to expression, each isoform has a distinct expression pattern. Isoform 1 is highly expressed in brain. Isoform 2 is expressed at low levels, if any, in all analyzed tissues, with slightly higher levels in testis. Isoform 3 is expressed at very high levels in testis and, at lower levels, in white adipose tissue. In epididymal fat, isoform 3 is expressed at higher levels in obese mice compared with lean mice. By contrast, isoform 1 and 2 levels are significantly lower in obese mice compared with lean mice.

The protein localises to the golgi apparatus membrane. It is found in the endoplasmic reticulum membrane. It catalyses the reaction sphing-4-enine + octadecanoyl-CoA = N-octadecanoylsphing-4-enine + CoA + H(+). The enzyme catalyses eicosanoyl-CoA + sphing-4-enine = N-eicosanoyl-sphing-4-enine + CoA + H(+). It carries out the reaction sphing-4-enine + hexadecanoyl-CoA = N-hexadecanoylsphing-4-enine + CoA + H(+). Functionally, involved in ceramide synthesis. In vitro, isoform 3 stimulates the production of C16-, C18- and C20-ceramides, isoform 1 slightly increases the levels of C18- and C20-ceramides, while isoform 2 exhibits only minimal activity. May interfere with adipogenesis by stimulating ceramide synthesis. The protein is Ceramide synthase (Tlcd3b) of Mus musculus (Mouse).